The chain runs to 231 residues: 2-C-methyl-D-erythritol 4-phosphate cytidylyltransferase (231 aa).

It belongs to the IspD/TarI cytidylyltransferase family. IspD subfamily.

The enzyme catalyses 2-C-methyl-D-erythritol 4-phosphate + CTP + H(+) = 4-CDP-2-C-methyl-D-erythritol + diphosphate. It functions in the pathway isoprenoid biosynthesis; isopentenyl diphosphate biosynthesis via DXP pathway; isopentenyl diphosphate from 1-deoxy-D-xylulose 5-phosphate: step 2/6. Its function is as follows. Catalyzes the formation of 4-diphosphocytidyl-2-C-methyl-D-erythritol from CTP and 2-C-methyl-D-erythritol 4-phosphate (MEP). The protein is 2-C-methyl-D-erythritol 4-phosphate cytidylyltransferase of Xylella fastidiosa (strain M23).